We begin with the raw amino-acid sequence, 601 residues long: Zinc finger protein 37 (601 aa).

Positions 1–70 (MATPEPAESD…VRANKNSSSS (70 aa)) constitute a KRAB domain. At threonine 3 the chain carries Phosphothreonine. Residue serine 9 is modified to Phosphoserine. A compositionally biased stretch (polar residues) spans 30-43 (ETCSNPASMGNQDP). The segment at 30 to 254 (ETCSNPASMG…SKSDKAPGSG (225 aa)) is disordered. Residues 60–70 (SVRANKNSSSS) show a composition bias toward low complexity. Over residues 77 to 88 (TGTSAKVQQDGA) the composition is skewed to polar residues. Composition is skewed to basic and acidic residues over residues 115-136 (KSSE…PSEK), 164-174 (KKPDTANEYRK), and 183-238 (VNRD…EKRK). A C2H2-type 1 zinc finger spans residues 257–279 (YECNQCGKVLSHKQGLLDHQRTH). The C2H2-type 2; atypical zinc finger occupies 285 to 303 (YECYECGIAFSQKSHLVVH). 10 C2H2-type zinc fingers span residues 314–337 (YECV…RISH), 343–365 (YKCN…IRSH), 371–393 (YECK…VRTH), 399–421 (YECN…MRIH), 427–449 (FECT…QRTH), 455–477 (YKCK…MRTH), 483–505 (FECN…QRVH), 511–533 (YECV…QRTH), 539–561 (FECY…QRSH), and 570–592 (YECV…MKTH).

The protein belongs to the krueppel C2H2-type zinc-finger protein family. In terms of tissue distribution, expressed in testes, brain, kidney, spleen, thymus, lung, and at low levels in liver.

Its subcellular location is the nucleus. Its function is as follows. May be involved in transcriptional regulation. In Rattus norvegicus (Rat), this protein is Zinc finger protein 37 (Zfp37).